A 169-amino-acid chain; its full sequence is X polypeptide (169 aa).

Belongs to the IagB/IpgF/P19 family.

This is X polypeptide (X) from Escherichia coli.